Here is a 188-residue protein sequence, read N- to C-terminus: ATP synthase subunit b (188 aa).

Residues 19–39 (VYVLGATIVSFLILFLFITYF) form a helical membrane-spanning segment.

The protein belongs to the ATPase B chain family. F-type ATPases have 2 components, F(1) - the catalytic core - and F(0) - the membrane proton channel. F(1) has five subunits: alpha(3), beta(3), gamma(1), delta(1), epsilon(1). F(0) has three main subunits: a(1), b(2) and c(10-14). The alpha and beta chains form an alternating ring which encloses part of the gamma chain. F(1) is attached to F(0) by a central stalk formed by the gamma and epsilon chains, while a peripheral stalk is formed by the delta and b chains.

The protein resides in the cell membrane. In terms of biological role, f(1)F(0) ATP synthase produces ATP from ADP in the presence of a proton or sodium gradient. F-type ATPases consist of two structural domains, F(1) containing the extramembraneous catalytic core and F(0) containing the membrane proton channel, linked together by a central stalk and a peripheral stalk. During catalysis, ATP synthesis in the catalytic domain of F(1) is coupled via a rotary mechanism of the central stalk subunits to proton translocation. Component of the F(0) channel, it forms part of the peripheral stalk, linking F(1) to F(0). The protein is ATP synthase subunit b of Mesomycoplasma hyopneumoniae (strain J / ATCC 25934 / NCTC 10110) (Mycoplasma hyopneumoniae).